The following is a 295-amino-acid chain: Ribosomal protein L11 methyltransferase (295 aa).

S-adenosyl-L-methionine contacts are provided by threonine 145, glycine 166, aspartate 188, and asparagine 230.

It belongs to the methyltransferase superfamily. PrmA family.

It localises to the cytoplasm. The catalysed reaction is L-lysyl-[protein] + 3 S-adenosyl-L-methionine = N(6),N(6),N(6)-trimethyl-L-lysyl-[protein] + 3 S-adenosyl-L-homocysteine + 3 H(+). Methylates ribosomal protein L11. In Pectobacterium carotovorum subsp. carotovorum (strain PC1), this protein is Ribosomal protein L11 methyltransferase.